The sequence spans 244 residues: DNA polymerase sliding clamp (244 aa).

This sequence belongs to the PCNA family. Homotrimer. The subunits circularize to form a toroid; DNA passes through its center. Replication factor C (RFC) is required to load the toroid on the DNA.

Its function is as follows. Sliding clamp subunit that acts as a moving platform for DNA processing. Responsible for tethering the catalytic subunit of DNA polymerase to DNA during high-speed replication. In conjunction with replication factor C (RFC) stimulates DNA synthesis by PolB, relieving inhibition by replication protein A (RPA). This Methanothermobacter thermautotrophicus (strain ATCC 29096 / DSM 1053 / JCM 10044 / NBRC 100330 / Delta H) (Methanobacterium thermoautotrophicum) protein is DNA polymerase sliding clamp.